The sequence spans 314 residues: Acetaldehyde dehydrogenase 1 (314 aa).

Position 15–18 (15–18) interacts with NAD(+); it reads SGNI. Residue cysteine 133 is the Acyl-thioester intermediate of the active site. NAD(+) contacts are provided by residues 164–172 and asparagine 291; that span reads SAGPGTRAN.

Belongs to the acetaldehyde dehydrogenase family.

The enzyme catalyses acetaldehyde + NAD(+) + CoA = acetyl-CoA + NADH + H(+). The protein is Acetaldehyde dehydrogenase 1 of Paraburkholderia xenovorans (strain LB400).